The sequence spans 427 residues: Serine hydroxymethyltransferase (427 aa).

(6S)-5,6,7,8-tetrahydrofolate-binding positions include Leu122 and 126–128; that span reads GHL. Lys231 carries the N6-(pyridoxal phosphate)lysine modification. (6S)-5,6,7,8-tetrahydrofolate is bound at residue 355–357; sequence SPF.

It belongs to the SHMT family. In terms of assembly, homodimer. Pyridoxal 5'-phosphate serves as cofactor.

The protein resides in the cytoplasm. The catalysed reaction is (6R)-5,10-methylene-5,6,7,8-tetrahydrofolate + glycine + H2O = (6S)-5,6,7,8-tetrahydrofolate + L-serine. It functions in the pathway one-carbon metabolism; tetrahydrofolate interconversion. The protein operates within amino-acid biosynthesis; glycine biosynthesis; glycine from L-serine: step 1/1. Catalyzes the reversible interconversion of serine and glycine with tetrahydrofolate (THF) serving as the one-carbon carrier. This reaction serves as the major source of one-carbon groups required for the biosynthesis of purines, thymidylate, methionine, and other important biomolecules. Also exhibits THF-independent aldolase activity toward beta-hydroxyamino acids, producing glycine and aldehydes, via a retro-aldol mechanism. This Synechococcus sp. (strain ATCC 27144 / PCC 6301 / SAUG 1402/1) (Anacystis nidulans) protein is Serine hydroxymethyltransferase.